Here is a 220-residue protein sequence, read N- to C-terminus: MANDQVILLDYWPSMFGMRTKMALAEKGVKYEYKETDPWVKTPLLIEMNPIHKKIPVLIHNGKPICESLIQLEYIDEVWSDASPILPSDPYQKSRARFWAEFIDKKFYDPSWKVWATMGEEHAAVKKELLEHFKTLETELGDKPYYGGEVFGYLDIALMGYYSWFKAMEKFGEFSIETEFPILTTWTKRCLERESVVKALADSDRIIEYVYVLRKKFGAA.

In terms of domain architecture, GST N-terminal spans 4–83 (DQVILLDYWP…YIDEVWSDAS (80 aa)). Residues 14–15 (SM), 40–41 (VK), 54–55 (KI), and 67–68 (ES) contribute to the glutathione site. A GST C-terminal domain is found at 89-210 (DPYQKSRARF…ADSDRIIEYV (122 aa)).

The protein belongs to the GST superfamily. Tau family.

Its subcellular location is the cytoplasm. It localises to the cytosol. It catalyses the reaction RX + glutathione = an S-substituted glutathione + a halide anion + H(+). In terms of biological role, in vitro, possesses glutathione S-transferase activity toward 1-chloro-2,4-dinitrobenzene (CDNB). May be involved in the conjugation of reduced glutathione to a wide number of exogenous and endogenous hydrophobic electrophiles and have a detoxification role against certain herbicides. The sequence is that of Glutathione S-transferase U26 (GSTU26) from Arabidopsis thaliana (Mouse-ear cress).